The following is a 238-amino-acid chain: Ion-translocating oxidoreductase complex subunit E (238 aa).

Transmembrane regions (helical) follow at residues 20–40, 41–61, 72–92, 95–115, 130–150, and 185–205; these read ALVQ…VVNA, LGLG…VSLI, PAFV…MKAF, ELYQ…AVLG, AVDG…VGAV, and NVIF…LIAA.

The protein belongs to the NqrDE/RnfAE family. In terms of assembly, the complex is composed of six subunits: RnfA, RnfB, RnfC, RnfD, RnfE and RnfG.

It is found in the cell inner membrane. Functionally, part of a membrane-bound complex that couples electron transfer with translocation of ions across the membrane. The chain is Ion-translocating oxidoreductase complex subunit E from Cellvibrio japonicus (strain Ueda107) (Pseudomonas fluorescens subsp. cellulosa).